The primary structure comprises 110 residues: MKHVAAYLLLVSAGNTSPSAEDVKKVLAAADIQADEERLSVLIKELEGKDVNEVIAEGSKKLASVPSGGAAPAAAAGGAAAGGAAEEKAEDKPAEKDEESDDDMGFGLFD.

O-(pantetheine 4'-phosphoryl)serine; in acyl carrier protein form is present on Ser59. The interval 62–110 (LASVPSGGAAPAAAAGGAAAGGAAEEKAEDKPAEKDEESDDDMGFGLFD) is disordered. A compositionally biased stretch (low complexity) spans 63-84 (ASVPSGGAAPAAAAGGAAAGGA). The segment covering 85–95 (AEEKAEDKPAE) has biased composition (basic and acidic residues). At Ser100 the chain carries Phosphoserine; in ribosomal stalk form.

This sequence belongs to the eukaryotic ribosomal protein P1/P2 family. As to quaternary structure, the phosphorylated form is part of the ribosomal stalk involved in the interaction of the elongation factors with the ribosome during protein synthesis. The phosphopantetheinylated form is part of the 10S triacylglycerol biosynthetic complex involved in de novo fatty acid biosynthesis. Post-translationally, 4'-phosphopantetheine is transferred from CoA to a specific serine by acpS. This modification is essential for activity because fatty acids are bound in thioester linkage to the sulfhydryl of the prosthetic group.

The protein resides in the cytoplasm. In terms of biological role, probable bifunctional protein. The phosphorylated protein plays an important role in the elongation step of protein synthesis. The phosphopantetheinylated protein acts as an acyl carrier protein. In Rhodotorula glutinis (Yeast), this protein is Large ribosomal subunit protein P2.